A 371-amino-acid polypeptide reads, in one-letter code: Spermidine/putrescine import ATP-binding protein PotA (371 aa).

Positions 10–240 (VELRNVTKSY…PKNLFVARFI (231 aa)) constitute an ABC transporter domain. 42–49 (GPSGCGKT) serves as a coordination point for ATP.

The protein belongs to the ABC transporter superfamily. Spermidine/putrescine importer (TC 3.A.1.11.1) family. In terms of assembly, the complex is composed of two ATP-binding proteins (PotA), two transmembrane proteins (PotB and PotC) and a solute-binding protein (PotD).

It localises to the cell inner membrane. The enzyme catalyses ATP + H2O + polyamine-[polyamine-binding protein]Side 1 = ADP + phosphate + polyamineSide 2 + [polyamine-binding protein]Side 1.. In terms of biological role, part of the ABC transporter complex PotABCD involved in spermidine/putrescine import. Responsible for energy coupling to the transport system. The protein is Spermidine/putrescine import ATP-binding protein PotA of Haemophilus ducreyi (strain 35000HP / ATCC 700724).